The following is a 598-amino-acid chain: Chaperone protein DnaK (598 aa).

Residue Thr-175 is modified to Phosphothreonine; by autocatalysis. The span at 571–591 (AKSAAASSNKDDSLNNNSSSN) shows a compositional bias: low complexity. The tract at residues 571 to 598 (AKSAAASSNKDDSLNNNSSSNNDEETFE) is disordered.

The protein belongs to the heat shock protein 70 family.

Acts as a chaperone. The chain is Chaperone protein DnaK from Mycoplasmopsis agalactiae (strain NCTC 10123 / CIP 59.7 / PG2) (Mycoplasma agalactiae).